We begin with the raw amino-acid sequence, 114 residues long: Hydrogenase maturation factor HypA (114 aa).

His-2 contacts Ni(2+). Zn(2+) is bound by residues Cys-70, Cys-73, Cys-86, and Cys-89.

It belongs to the HypA/HybF family.

Its function is as follows. Involved in the maturation of [NiFe] hydrogenases. Required for nickel insertion into the metal center of the hydrogenase. The chain is Hydrogenase maturation factor HypA from Rippkaea orientalis (strain PCC 8801 / RF-1) (Cyanothece sp. (strain PCC 8801)).